Here is a 207-residue protein sequence, read N- to C-terminus: Serotype 2 fimbrial subunit (207 aa).

Positions 1–26 (MQIPFQRALRLCLRAALAAIASAAHA) are cleaved as a signal peptide. A disulfide bridge connects residues C42 and C85.

The protein belongs to the fimbrial protein family.

Its subcellular location is the fimbrium. Its function is as follows. Bordetella pertussis is the causative agent of whooping cough. An essential step in the disease process is the attachment of the bacteria to the ciliated epithelium of the respiratory tract, enabling the organism to resist normal host-clearance mechanisms. It is unclear which bacterial cell surface component are responsible for adherence but the fimbriae of B.pertussis are prime candidates for being involved in this process. In Bordetella pertussis (strain Tohama I / ATCC BAA-589 / NCTC 13251), this protein is Serotype 2 fimbrial subunit (fim2).